We begin with the raw amino-acid sequence, 166 residues long: NADH-quinone oxidoreductase subunit I (166 aa).

4Fe-4S ferredoxin-type domains are found at residues 57–87 (LRRY…IESE) and 97–126 (TRYD…VTPI). The [4Fe-4S] cluster site is built by Cys67, Cys70, Cys73, Cys77, Cys106, Cys109, Cys112, and Cys116.

It belongs to the complex I 23 kDa subunit family. In terms of assembly, NDH-1 is composed of 14 different subunits. Subunits NuoA, H, J, K, L, M, N constitute the membrane sector of the complex. It depends on [4Fe-4S] cluster as a cofactor.

The protein localises to the cell inner membrane. The enzyme catalyses a quinone + NADH + 5 H(+)(in) = a quinol + NAD(+) + 4 H(+)(out). Its function is as follows. NDH-1 shuttles electrons from NADH, via FMN and iron-sulfur (Fe-S) centers, to quinones in the respiratory chain. The immediate electron acceptor for the enzyme in this species is believed to be ubiquinone. Couples the redox reaction to proton translocation (for every two electrons transferred, four hydrogen ions are translocated across the cytoplasmic membrane), and thus conserves the redox energy in a proton gradient. The protein is NADH-quinone oxidoreductase subunit I of Legionella pneumophila (strain Lens).